A 719-amino-acid chain; its full sequence is Protein psiJ (719 aa).

The first 21 residues, 1–21 (MVSNLLKGLILFSLFISFLNG), serve as a signal peptide directing secretion. The Extracellular segment spans residues 22–653 (DDKIFPVTIR…RCQSVAVKAG (632 aa)). 10 N-linked (GlcNAc...) asparagine glycosylation sites follow: N46, N59, N86, N113, N301, N372, N435, N457, N562, and N628. Positions 112–260 (QNQTDPRVFY…KDYCGVCEGT (149 aa)) constitute a PA14 domain. A helical transmembrane segment spans residues 654–674 (VIGGAAIAGVVVGGAVALGLA). The Cytoplasmic segment spans residues 675–719 (LFGAKAGYNHWMSLKNNQMATSSVNPLYEPSPHQGTNPLWEAPPT).

It belongs to the prespore-cell-inducing factor family.

The protein localises to the membrane. In Dictyostelium discoideum (Social amoeba), this protein is Protein psiJ (psiJ).